The primary structure comprises 412 residues: Argininosuccinate synthase (412 aa).

ATP contacts are provided by residues 16 to 24 (AYSGGLDTS) and A44. L-citrulline is bound by residues Y96 and S101. G126 provides a ligand contact to ATP. Positions 128, 132, and 133 each coordinate L-aspartate. N132 contacts L-citrulline. L-citrulline contacts are provided by R136, S185, S194, E270, and Y282.

It belongs to the argininosuccinate synthase family. Type 1 subfamily. Homotetramer.

It is found in the cytoplasm. It catalyses the reaction L-citrulline + L-aspartate + ATP = 2-(N(omega)-L-arginino)succinate + AMP + diphosphate + H(+). It participates in amino-acid biosynthesis; L-arginine biosynthesis; L-arginine from L-ornithine and carbamoyl phosphate: step 2/3. This is Argininosuccinate synthase from Shewanella baltica (strain OS185).